Reading from the N-terminus, the 499-residue chain is Potassium channel subfamily K member 5 (499 aa).

Residues 1-7 are Cytoplasmic-facing; it reads MVDRGPL. A helical membrane pass occupies residues 8 to 26; sequence LTSAIIFYLAIGAAIFEVL. Asparagine 77 carries an N-linked (GlcNAc...) asparagine glycan. Positions 85-112 form an intramembrane region, pore-forming; sequence WPNAMIFAATVITTIGYGNVAPKTPAGR. K(+)-binding residues include threonine 98, isoleucine 99, glycine 100, and tyrosine 101. The selectivity filter 1 stretch occupies residues 98 to 103; that stretch reads TIGYGN. The helical transmembrane segment at 113–133 threads the bilayer; it reads LFCVFYGLFGVPLCLTWISAL. The Cytoplasmic portion of the chain corresponds to 134-157; sequence GKFFGGRAKRLGQFLTKRGVSLRK. Residues 158-180 form a helical membrane-spanning segment; that stretch reads AQITCTVIFIVWGVLVHLVIPPF. The pore-forming intramembrane region spans 190–215; the sequence is YIEGLYYSFITISTIGFGDFVAGVNP. K(+) is bound by residues threonine 203, isoleucine 204, glycine 205, and phenylalanine 206. The interval 203–208 is selectivity filter 2; sequence TIGFGD. Residues 230–250 form a helical membrane-spanning segment; that stretch reads WIYLGLAWLSLFVNWKVSMFV. Over 251–325 the chain is Cytoplasmic; the sequence is EVHKAIKKRR…SGGGETGPGP (75 aa). Disordered stretches follow at residues 312–335, 360–388, and 428–499; these read AMKT…GGLP, QTLR…SPAP, and GLSD…PKGT. Residues 316–334 show a composition bias toward gly residues; the sequence is SGGGETGPGPGLGPQGGGL. A compositionally biased stretch (basic and acidic residues) spans 370–382; sequence RSPDEEAVARAPE. At serine 371 the chain carries Phosphoserine. Residues 466 to 480 are compositionally biased toward low complexity; sequence SSSESTFTSTESELS.

Belongs to the two pore domain potassium channel (TC 1.A.1.8) family. In terms of assembly, homodimer; disulfide-linked. Heterodimer with KCNK16 and KCNK17. As to expression, abundant expression in kidney, also detected in liver, placenta and small intestine. In the kidney, expression is restricted to the distal tubules and collecting ducts. Not expressed in proximal tubules or glomeruli. Expressed in pancreas, in both endocrine (alpha, beta, gamma, delta, and epsilon) and exocrine (acinar and ductal) cells.

The protein localises to the membrane. It catalyses the reaction K(+)(in) = K(+)(out). With respect to regulation, the channel conductance is stimulated by extracellular alkaline pH. Inhibited by quinine, quinidine and external acidification. K(+) channel that conducts voltage-dependent outward rectifying currents upon membrane depolarization. Voltage sensing is coupled to K(+) electrochemical gradient in an 'ion flux gating' mode where outward but not inward ion flow opens the gate. Homo- and heterodimerizes to form functional channels with distinct regulatory and gating properties. In Homo sapiens (Human), this protein is Potassium channel subfamily K member 5.